A 176-amino-acid chain; its full sequence is Peroxynitrite isomerase 1 (176 aa).

The disordered stretch occupies residues 1 to 23 (MDENSTLSPAHSDAAASSSANTP). Over residues 8–20 (SPAHSDAAASSSA) the composition is skewed to low complexity. A GXWXGXG motif is present at residues 37–43 (GLWRGEG). His-168 lines the heme b pocket.

It belongs to the nitrobindin family. As to quaternary structure, homodimer. Heme b is required as a cofactor.

The catalysed reaction is peroxynitrite = nitrate. The protein operates within nitrogen metabolism. Heme-binding protein able to scavenge peroxynitrite and to protect free L-tyrosine against peroxynitrite-mediated nitration, by acting as a peroxynitrite isomerase that converts peroxynitrite to nitrate. Therefore, this protein likely plays a role in peroxynitrite sensing and in the detoxification of reactive nitrogen and oxygen species (RNS and ROS, respectively). Is able to bind nitric oxide (NO) in vitro, but may act as a sensor of peroxynitrite levels in vivo. The polypeptide is Peroxynitrite isomerase 1 (Rhodococcus jostii (strain RHA1)).